The primary structure comprises 640 residues: Threonine--tRNA ligase (640 aa).

The region spanning 1–61 is the TGS domain; that stretch reads MPIITLPNGD…TEDSTLQIIT (61 aa). The tract at residues 242–533 is catalytic; sequence DHRKIGKALD…LIEHYAGFMP (292 aa). Positions 333, 384, and 510 each coordinate Zn(2+).

The protein belongs to the class-II aminoacyl-tRNA synthetase family. As to quaternary structure, homodimer. Requires Zn(2+) as cofactor.

Its subcellular location is the cytoplasm. The enzyme catalyses tRNA(Thr) + L-threonine + ATP = L-threonyl-tRNA(Thr) + AMP + diphosphate + H(+). Catalyzes the attachment of threonine to tRNA(Thr) in a two-step reaction: L-threonine is first activated by ATP to form Thr-AMP and then transferred to the acceptor end of tRNA(Thr). Also edits incorrectly charged L-seryl-tRNA(Thr). The sequence is that of Threonine--tRNA ligase from Acinetobacter baumannii (strain AB307-0294).